The sequence spans 249 residues: Type III pantothenate kinase (249 aa).

Position 6 to 13 (6 to 13 (DAGNSRIK)) interacts with ATP. Substrate is bound by residues Phe-77 and 98–101 (GVDR). The Proton acceptor role is filled by Asp-100. Asp-121 lines the K(+) pocket. Residue Ser-124 coordinates ATP. Thr-177 provides a ligand contact to substrate.

It belongs to the type III pantothenate kinase family. Homodimer. NH4(+) is required as a cofactor. It depends on K(+) as a cofactor.

The protein resides in the cytoplasm. The catalysed reaction is (R)-pantothenate + ATP = (R)-4'-phosphopantothenate + ADP + H(+). It functions in the pathway cofactor biosynthesis; coenzyme A biosynthesis; CoA from (R)-pantothenate: step 1/5. Its function is as follows. Catalyzes the phosphorylation of pantothenate (Pan), the first step in CoA biosynthesis. The chain is Type III pantothenate kinase from Teredinibacter turnerae (strain ATCC 39867 / T7901).